Here is a 289-residue protein sequence, read N- to C-terminus: ATP synthase subunit a (289 aa).

The next 6 membrane-spanning stretches (helical) occupy residues 43–63 (AFHV…VLIF), 101–121 (SAVI…MNAV), 160–180 (LSVF…GGFI), 193–213 (LFVQ…TLIA), 232–252 (VFIL…GLGV), and 259–279 (AVFH…LTIV).

It belongs to the ATPase A chain family. As to quaternary structure, F-type ATPases have 2 components, CF(1) - the catalytic core - and CF(0) - the membrane proton channel. CF(1) has five subunits: alpha(3), beta(3), gamma(1), delta(1), epsilon(1). CF(0) has three main subunits: a(1), b(2) and c(9-12). The alpha and beta chains form an alternating ring which encloses part of the gamma chain. CF(1) is attached to CF(0) by a central stalk formed by the gamma and epsilon chains, while a peripheral stalk is formed by the delta and b chains.

The protein localises to the cell inner membrane. Functionally, key component of the proton channel; it plays a direct role in the translocation of protons across the membrane. This chain is ATP synthase subunit a, found in Pseudomonas syringae pv. syringae (strain B728a).